A 348-amino-acid chain; its full sequence is Fructose-1,6-bisphosphatase class 1 (348 aa).

4 residues coordinate Mg(2+): Glu92, Asp111, Leu113, and Asp114. Residues 114–117 (DGSS) and Asn204 each bind substrate. Glu276 contacts Mg(2+).

The protein belongs to the FBPase class 1 family. In terms of assembly, homotetramer. Mg(2+) serves as cofactor.

Its subcellular location is the cytoplasm. It catalyses the reaction beta-D-fructose 1,6-bisphosphate + H2O = beta-D-fructose 6-phosphate + phosphate. It functions in the pathway carbohydrate biosynthesis; gluconeogenesis. This chain is Fructose-1,6-bisphosphatase class 1, found in Methylorubrum extorquens (strain CM4 / NCIMB 13688) (Methylobacterium extorquens).